A 260-amino-acid chain; its full sequence is Ubiquinone/menaquinone biosynthesis C-methyltransferase UbiE (260 aa).

S-adenosyl-L-methionine is bound by residues Thr-83, Asp-104, 132–133, and Ser-149; that span reads NA.

The protein belongs to the class I-like SAM-binding methyltransferase superfamily. MenG/UbiE family.

It catalyses the reaction a 2-demethylmenaquinol + S-adenosyl-L-methionine = a menaquinol + S-adenosyl-L-homocysteine + H(+). The catalysed reaction is a 2-methoxy-6-(all-trans-polyprenyl)benzene-1,4-diol + S-adenosyl-L-methionine = a 5-methoxy-2-methyl-3-(all-trans-polyprenyl)benzene-1,4-diol + S-adenosyl-L-homocysteine + H(+). The protein operates within quinol/quinone metabolism; menaquinone biosynthesis; menaquinol from 1,4-dihydroxy-2-naphthoate: step 2/2. Its pathway is cofactor biosynthesis; ubiquinone biosynthesis. Functionally, methyltransferase required for the conversion of demethylmenaquinol (DMKH2) to menaquinol (MKH2) and the conversion of 2-polyprenyl-6-methoxy-1,4-benzoquinol (DDMQH2) to 2-polyprenyl-3-methyl-6-methoxy-1,4-benzoquinol (DMQH2). The polypeptide is Ubiquinone/menaquinone biosynthesis C-methyltransferase UbiE (Vibrio vulnificus (strain CMCP6)).